The following is a 209-amino-acid chain: Ribonuclease HII (209 aa).

Positions 5-202 (SMTLGIDEAG…KNRILNPKLL (198 aa)) constitute an RNase H type-2 domain. Residues D11, E12, and D108 each contribute to the a divalent metal cation site.

It belongs to the RNase HII family. Mn(2+) is required as a cofactor. Requires Mg(2+) as cofactor.

It localises to the cytoplasm. The catalysed reaction is Endonucleolytic cleavage to 5'-phosphomonoester.. Functionally, endonuclease that specifically degrades the RNA of RNA-DNA hybrids. This chain is Ribonuclease HII (rnhB), found in Helicobacter pylori (strain J99 / ATCC 700824) (Campylobacter pylori J99).